A 209-amino-acid polypeptide reads, in one-letter code: Pyridoxine/pyridoxamine 5'-phosphate oxidase (209 aa).

Residues 7 to 10 (RADY) and lysine 64 each bind substrate. Residues 59-64 (RIVLLK), 74-75 (FT), and lysine 81 each bind FMN. 3 residues coordinate substrate: tyrosine 121, arginine 125, and serine 129. FMN contacts are provided by residues 138-139 (QS), tryptophan 182, and arginine 192.

This sequence belongs to the pyridoxamine 5'-phosphate oxidase family. As to quaternary structure, homodimer. FMN is required as a cofactor.

The enzyme catalyses pyridoxamine 5'-phosphate + O2 + H2O = pyridoxal 5'-phosphate + H2O2 + NH4(+). The catalysed reaction is pyridoxine 5'-phosphate + O2 = pyridoxal 5'-phosphate + H2O2. It participates in cofactor metabolism; pyridoxal 5'-phosphate salvage; pyridoxal 5'-phosphate from pyridoxamine 5'-phosphate: step 1/1. The protein operates within cofactor metabolism; pyridoxal 5'-phosphate salvage; pyridoxal 5'-phosphate from pyridoxine 5'-phosphate: step 1/1. Catalyzes the oxidation of either pyridoxine 5'-phosphate (PNP) or pyridoxamine 5'-phosphate (PMP) into pyridoxal 5'-phosphate (PLP). The chain is Pyridoxine/pyridoxamine 5'-phosphate oxidase from Haemophilus ducreyi (strain 35000HP / ATCC 700724).